The following is a 247-amino-acid chain: ATP synthase subunit a, chloroplastic (247 aa).

A run of 5 helical transmembrane segments spans residues 38–58, 95–115, 134–154, 199–219, and 220–240; these read QVLI…TVAV, VPFI…GALL, INTT…AGLT, LVVV…VMFL, and GLFT…AYIG.

It belongs to the ATPase A chain family. As to quaternary structure, F-type ATPases have 2 components, CF(1) - the catalytic core - and CF(0) - the membrane proton channel. CF(1) has five subunits: alpha(3), beta(3), gamma(1), delta(1), epsilon(1). CF(0) has four main subunits: a, b, b' and c.

It localises to the plastid. Its subcellular location is the chloroplast thylakoid membrane. In terms of biological role, key component of the proton channel; it plays a direct role in the translocation of protons across the membrane. The sequence is that of ATP synthase subunit a, chloroplastic from Platanus occidentalis (Sycamore).